The primary structure comprises 283 residues: Orotidine 5'-phosphate decarboxylase (283 aa).

The active-site Proton donor is the Lys97.

Belongs to the OMP decarboxylase family. Type 2 subfamily.

The enzyme catalyses orotidine 5'-phosphate + H(+) = UMP + CO2. It functions in the pathway pyrimidine metabolism; UMP biosynthesis via de novo pathway; UMP from orotate: step 2/2. This Clostridium botulinum (strain Kyoto / Type A2) protein is Orotidine 5'-phosphate decarboxylase.